Here is a 702-residue protein sequence, read N- to C-terminus: Ribosomal RNA large subunit methyltransferase K/L (702 aa).

The THUMP domain maps to 43–154; it reads LIYQSLMWSR…KETASIALDL (112 aa).

It belongs to the methyltransferase superfamily. RlmKL family.

The protein localises to the cytoplasm. The catalysed reaction is guanosine(2445) in 23S rRNA + S-adenosyl-L-methionine = N(2)-methylguanosine(2445) in 23S rRNA + S-adenosyl-L-homocysteine + H(+). It catalyses the reaction guanosine(2069) in 23S rRNA + S-adenosyl-L-methionine = N(2)-methylguanosine(2069) in 23S rRNA + S-adenosyl-L-homocysteine + H(+). Its function is as follows. Specifically methylates the guanine in position 2445 (m2G2445) and the guanine in position 2069 (m7G2069) of 23S rRNA. The chain is Ribosomal RNA large subunit methyltransferase K/L from Salmonella typhi.